Reading from the N-terminus, the 447-residue chain is RNA-binding protein 208 (447 aa).

2 consecutive RRM domains span residues 73 to 147 (RSVY…WAYA) and 158 to 236 (FHIF…WATK). The segment covering 254-269 (TNGSSSNPGMEASQDT) has biased composition (polar residues). Disordered stretches follow at residues 254-279 (TNGSSSNPGMEASQDTGSKENPENNP) and 353-372 (WGNKPTPPGTSSKPLPPPLP). Residues 282–356 (TTVYVGNLGH…KPIKCSWGNK (75 aa)) enclose the RRM 3 domain.

As to quaternary structure, interacts with RBP-P.

RNA-binding protein. This Oryza sativa subsp. japonica (Rice) protein is RNA-binding protein 208.